The chain runs to 293 residues: Nucleotide-binding protein LBA0691 (293 aa).

13-20 contributes to the ATP binding site; sequence GMSGAGKT. A GTP-binding site is contributed by 63 to 66; sequence DLRV.

This sequence belongs to the RapZ-like family.

Displays ATPase and GTPase activities. This chain is Nucleotide-binding protein LBA0691, found in Lactobacillus acidophilus (strain ATCC 700396 / NCK56 / N2 / NCFM).